Here is a 243-residue protein sequence, read N- to C-terminus: Cytochrome c oxidase subunit 2 (243 aa).

Residues 1–34 (MNNIIHNDAPTPWGIYFQDGASPVYDGIVELHDQ) lie on the Mitochondrial intermembrane side of the membrane. The chain crosses the membrane as a helical span at residues 35–55 (VLFYLLIVLVGVSWILFSTIL). Residues 56–74 (RFRGSGIVHKYHNHSTTIE) are Mitochondrial matrix-facing. A helical membrane pass occupies residues 75 to 97 (FVWTVSPALLLIAIAFPSFKLLY). Residues 98 to 243 (LMDEVIDPSI…EKFLSWLDNQ (146 aa)) lie on the Mitochondrial intermembrane side of the membrane. Positions 178, 213, 215, 217, 221, and 224 each coordinate Cu cation. Glutamate 215 contacts Mg(2+).

It belongs to the cytochrome c oxidase subunit 2 family. Component of the cytochrome c oxidase (complex IV, CIV), a multisubunit enzyme composed of a catalytic core of 3 subunits and several supernumerary subunits. The complex exists as a monomer or a dimer and forms supercomplexes (SCs) in the inner mitochondrial membrane with ubiquinol-cytochrome c oxidoreductase (cytochrome b-c1 complex, complex III, CIII). Cu cation serves as cofactor.

The protein localises to the mitochondrion inner membrane. It catalyses the reaction 4 Fe(II)-[cytochrome c] + O2 + 8 H(+)(in) = 4 Fe(III)-[cytochrome c] + 2 H2O + 4 H(+)(out). Functionally, component of the cytochrome c oxidase, the last enzyme in the mitochondrial electron transport chain which drives oxidative phosphorylation. The respiratory chain contains 3 multisubunit complexes succinate dehydrogenase (complex II, CII), ubiquinol-cytochrome c oxidoreductase (cytochrome b-c1 complex, complex III, CIII) and cytochrome c oxidase (complex IV, CIV), that cooperate to transfer electrons derived from NADH and succinate to molecular oxygen, creating an electrochemical gradient over the inner membrane that drives transmembrane transport and the ATP synthase. Cytochrome c oxidase is the component of the respiratory chain that catalyzes the reduction of oxygen to water. Electrons originating from reduced cytochrome c in the intermembrane space (IMS) are transferred via the dinuclear copper A center (CU(A)) of subunit 2 and heme A of subunit 1 to the active site in subunit 1, a binuclear center (BNC) formed by heme A3 and copper B (CU(B)). The BNC reduces molecular oxygen to 2 water molecules using 4 electrons from cytochrome c in the IMS and 4 protons from the mitochondrial matrix. The sequence is that of Cytochrome c oxidase subunit 2 from Pneumocystis carinii.